A 28-amino-acid polypeptide reads, in one-letter code: Phospholipase A2 3 (28 aa).

The protein belongs to the phospholipase A2 family. Group I subfamily. Requires Ca(2+) as cofactor. Expressed by the venom gland.

The protein localises to the secreted. It catalyses the reaction a 1,2-diacyl-sn-glycero-3-phosphocholine + H2O = a 1-acyl-sn-glycero-3-phosphocholine + a fatty acid + H(+). In terms of biological role, snake venom phospholipase A2 (PLA2) that inhibits neuromuscular transmission by blocking acetylcholine release from the nerve termini. PLA2 catalyzes the calcium-dependent hydrolysis of the 2-acyl groups in 3-sn-phosphoglycerides. The chain is Phospholipase A2 3 from Micrurus nigrocinctus (Central American coral snake).